We begin with the raw amino-acid sequence, 1326 residues long: Probable serine/threonine-protein kinase gdt8 (1326 aa).

An N-terminal signal peptide occupies residues 1 to 22; it reads MINKILIKLITIIIFCFSFLFA. Over 23–782 the chain is Extracellular; sequence EEDLIRTPPG…VDRNENLELK (760 aa). Disordered regions lie at residues 419-467 and 731-762; these read VDQN…GNQG and EPPTETPTETPTETPTETPTDTPTQTPTQTPI. Composition is skewed to low complexity over residues 422–460 and 731–761; these read NNNNNNNNNNNNNNNNNNNNNNNNNNNNNNNNNNNNNNN and EPPTETPTETPTETPTETPTDTPTQTPTQTP. A helical transmembrane segment spans residues 783-803; the sequence is IALPICLSLALLIGIIIMICI. Residues 804 to 1326 are Cytoplasmic-facing; sequence FKKVQSNSKL…TKEDKDLDEN (523 aa). The disordered stretch occupies residues 833–858; that stretch reads IVSQPPTVIEEKPQDNSKPDDQKLIE. Residues 841–858 are compositionally biased toward basic and acidic residues; sequence IEEKPQDNSKPDDQKLIE. Residues 1036–1292 enclose the Protein kinase domain; the sequence is IKTEQLIASY…FSEISLHLEI (257 aa). Residues 1042-1050 and K1065 contribute to the ATP site; that span reads IASYLPSKV. D1158 serves as the catalytic Proton acceptor. Residues 1301 to 1326 are disordered; that stretch reads MNESEESTSNHNTNSKTKEDKDLDEN. Residues 1316–1326 are compositionally biased toward basic and acidic residues; it reads KTKEDKDLDEN.

This sequence in the N-terminal section; belongs to the GDT family. The protein in the C-terminal section; belongs to the protein kinase superfamily. TKL Ser/Thr protein kinase family.

The protein resides in the membrane. The catalysed reaction is L-seryl-[protein] + ATP = O-phospho-L-seryl-[protein] + ADP + H(+). It carries out the reaction L-threonyl-[protein] + ATP = O-phospho-L-threonyl-[protein] + ADP + H(+). The chain is Probable serine/threonine-protein kinase gdt8 (gdt8) from Dictyostelium discoideum (Social amoeba).